Consider the following 752-residue polypeptide: Mitochondrial Rho GTPase 1 (752 aa).

Over 1 to 671 (MRKDVRIVLA…RNALSYGTNR (671 aa)) the chain is Cytoplasmic. One can recognise a Miro 1 domain in the interval 2 to 170 (RKDVRIVLAG…FYFAQKAVLY (169 aa)). Residues 11–18 (GDPDVGKS), 57–61 (DTSSS), and 115–118 (NKID) contribute to the GTP site. 2 consecutive EF-hand domains span residues 186–221 (ACVD…CFDT) and 333–368 (NGYQ…APDN). Ca(2+)-binding residues include Asp-199, Asp-201, Asp-203, Glu-210, Asp-346, Asp-348, Asp-350, and Glu-357. The disordered stretch occupies residues 426 to 460 (SSGSASTPAPIPLTPTGPPGSRPSRNRTPCPPSTI). The span at 434–446 (APIPLTPTGPPGS) shows a compositional bias: pro residues. In terms of domain architecture, Miro 2 spans 481–651 (RSVFLGFVLG…YGLICTIAVD (171 aa)). GTP is bound by residues 490–497 (GAAGSGKT), 526–530 (EQAGA), and 595–598 (TKAD). A helical; Anchor for type IV membrane protein membrane pass occupies residues 672-692 (WQFWGYIGLVVIGGGGAVWIC). At 693 to 752 (AKVLKVPIGSTLGFGSSASTTSWWLSGAQARGAGGPNATKVSSWFDWIRWQSSSNVRSEL) the chain is on the mitochondrial intermembrane side.

It belongs to the mitochondrial Rho GTPase family.

It is found in the mitochondrion outer membrane. In terms of biological role, mitochondrial GTPase involved in mitochondrial trafficking. Probably involved in control of anterograde transport of mitochondria and their subcellular distribution. This Mycosarcoma maydis (Corn smut fungus) protein is Mitochondrial Rho GTPase 1 (GEM1).